Consider the following 311-residue polypeptide: Methionyl-tRNA formyltransferase (311 aa).

110-113 (SLLP) contacts (6S)-5,6,7,8-tetrahydrofolate.

The protein belongs to the Fmt family.

It carries out the reaction L-methionyl-tRNA(fMet) + (6R)-10-formyltetrahydrofolate = N-formyl-L-methionyl-tRNA(fMet) + (6S)-5,6,7,8-tetrahydrofolate + H(+). Functionally, attaches a formyl group to the free amino group of methionyl-tRNA(fMet). The formyl group appears to play a dual role in the initiator identity of N-formylmethionyl-tRNA by promoting its recognition by IF2 and preventing the misappropriation of this tRNA by the elongation apparatus. The protein is Methionyl-tRNA formyltransferase of Streptococcus pneumoniae serotype 2 (strain D39 / NCTC 7466).